Consider the following 151-residue polypeptide: Type 4 adapter protein IcmW (151 aa).

The T4BSS is a complex nanomachine composed of several subcomplexes. This subunit is part of the Type IV Coupling Complex (T4CC), a subcomplex composed of the DotLMNYZ core and the IcmSW-LvgA adapter subunits, linked by the C-terminal tail of DotL. Interacts with IcmS. IcmS and IcmW form a stable complex. Interaction with IcmS greatly enhances the stability of IcmW. Interacts directly with the type 4 coupling protein DotL. Interacts with LvgA. Interacts with effector proteins.

The protein localises to the cytoplasm. Interaction with DotL is critical for the export of IcmSW-dependent substrates. Component of the Dot/Icm type IVB secretion system (T4BSS), which is used to inject bacterial effector proteins into eukaryotic host cells. Part of a subcomplex which recruits effector proteins and delivers them to the core transmembrane subcomplex. The IcmS/IcmW protein complex plays an important role in protein translocation by interacting with multiple Dot/Icm effector proteins to facilitate their translocation into host cells. Interaction promotes conformational changes in the effector protein, which may facilitate display of a C-terminal translocation signal. May maintain the substrates in a translocation competent form. Required for intracellular growth in host cells, replicative phagosome formation and phagosome trafficking. The protein is Type 4 adapter protein IcmW of Legionella pneumophila subsp. pneumophila (strain Philadelphia 1 / ATCC 33152 / DSM 7513).